We begin with the raw amino-acid sequence, 200 residues long: Peptidyl-tRNA hydrolase (200 aa).

Residue Phe16 participates in tRNA binding. His21 acts as the Proton acceptor in catalysis. TRNA-binding residues include Phe67, Asn69, and Asn115.

This sequence belongs to the PTH family. In terms of assembly, monomer.

The protein localises to the cytoplasm. The catalysed reaction is an N-acyl-L-alpha-aminoacyl-tRNA + H2O = an N-acyl-L-amino acid + a tRNA + H(+). Its function is as follows. Hydrolyzes ribosome-free peptidyl-tRNAs (with 1 or more amino acids incorporated), which drop off the ribosome during protein synthesis, or as a result of ribosome stalling. Functionally, catalyzes the release of premature peptidyl moieties from peptidyl-tRNA molecules trapped in stalled 50S ribosomal subunits, and thus maintains levels of free tRNAs and 50S ribosomes. In Prochlorococcus marinus (strain MIT 9215), this protein is Peptidyl-tRNA hydrolase.